A 313-amino-acid chain; its full sequence is Intracellular endo-alpha-(1-&gt;5)-L-arabinanase (313 aa).

Asp-27 (proton acceptor) is an active-site residue. Substrate is bound by residues Asp-27, Gly-105, Asn-144–Asp-147, and Ser-164–Trp-166. Glu-201 acts as the Proton donor in catalysis. His-271 lines the Ca(2+) pocket.

It belongs to the glycosyl hydrolase 43 family. In terms of assembly, monomer. Ca(2+) serves as cofactor.

It is found in the cytoplasm. It carries out the reaction Endohydrolysis of (1-&gt;5)-alpha-arabinofuranosidic linkages in (1-&gt;5)-arabinans.. Its pathway is glycan metabolism; L-arabinan degradation. Involved in the degradation of arabinan and is a key enzyme in the complete degradation of the plant cell wall. Catalyzes the cleavage of endo alpha-(1-&gt;5)-L-arabinofuranosyl residues in debranched arabinan. The protein is Intracellular endo-alpha-(1-&gt;5)-L-arabinanase (abn-ts) of Geobacillus thermodenitrificans.